The sequence spans 402 residues: Zinc finger protein 586 (402 aa).

The 73-residue stretch at 15–87 folds into the KRAB domain; the sequence is VTFEDVAVNF…DQGGHSGERP (73 aa). The C2H2-type 1; degenerate zinc finger occupies 88–116; it reads YECGEYRKLFKNKSCLTEPRRDHKHRNVR. The segment at 122 to 144 adopts a C2H2-type 2; degenerate zinc-finger fold; that stretch reads YECSKYGKLFHQKPTLHIHERFH. The C2H2-type 3; degenerate zinc finger occupies 150-172; that stretch reads YECSECGKSFHQSSSLLQRQTLH. 8 consecutive C2H2-type zinc fingers follow at residues 178-200, 206-228, 234-256, 262-284, 290-312, 317-339, 345-367, and 373-395; these read YECI…RKVH, YECN…RRIH, YECS…LRVH, YECV…QRVH, YECS…QRVH, HECG…LRVH, and YECI…QRVH.

It belongs to the krueppel C2H2-type zinc-finger protein family.

The protein localises to the nucleus. Its function is as follows. May be involved in transcriptional regulation. The protein is Zinc finger protein 586 (ZNF586) of Homo sapiens (Human).